The sequence spans 381 residues: NF-kappa-B inhibitor-like protein 1 (381 aa).

The disordered stretch occupies residues 1–34 (MSNPSPQVPEEEASTSVCRPKSSMASTSRRQRRE). 2 ANK repeats span residues 64–93 (GQPP…DPAH) and 97–133 (HGDT…IKNK). 3 disordered regions span residues 131 to 167 (KNKD…EWRQ), 186 to 242 (GDAS…QEEE), and 256 to 294 (ELRE…RGSL). Ser-150 is subject to Phosphoserine. Acidic residues predominate over residues 150-159 (SAEEEEEDDA). A compositionally biased stretch (basic and acidic residues) spans 256–287 (ELRESRARRAQEALGDREPKPARAGPRAEHPR).

Interacts with CACTIN (via N-terminal domain); the interaction occurs in a pro-inflammatory-independent manner.

It localises to the nucleus. Its function is as follows. Involved in the regulation of innate immune response. Acts as negative regulator of Toll-like receptor and interferon-regulatory factor (IRF) signaling pathways. Contributes to the negative regulation of transcriptional activation of NF-kappa-B target genes in response to endogenous pro-inflammatory stimuli. The chain is NF-kappa-B inhibitor-like protein 1 (NFKBIL1) from Macaca mulatta (Rhesus macaque).